We begin with the raw amino-acid sequence, 62 residues long: Bowman-Birk type proteinase inhibitor (62 aa).

Disulfide bonds link cysteine 8/cysteine 61, cysteine 9/cysteine 24, cysteine 12/cysteine 57, cysteine 14/cysteine 22, cysteine 31/cysteine 38, cysteine 35/cysteine 50, and cysteine 40/cysteine 48.

Forms a monomer at protein concentrations of below 1 mM. At concentrations of above 2 mM, self-associates.

In terms of biological role, inhibits trypsin but not chymotrypsin. Inhibits the trypsin-like proteinase activity present in larvae of the crop pests Adoxophyes orana, Hyphantria cunea, Lobesia botrana and Ostrinia nubilalis. This chain is Bowman-Birk type proteinase inhibitor, found in Medicago scutellata (Snail medic).